Consider the following 88-residue polypeptide: Small ribosomal subunit protein bS20 (88 aa).

Residues 1 to 28 form a disordered region; that stretch reads MANTVQARKRARQAVKQNEHNSSLRSKL.

The protein belongs to the bacterial ribosomal protein bS20 family.

Binds directly to 16S ribosomal RNA. This Polynucleobacter necessarius subsp. necessarius (strain STIR1) protein is Small ribosomal subunit protein bS20.